The sequence spans 350 residues: Ion-translocating oxidoreductase complex subunit D (350 aa).

5 consecutive transmembrane segments (helical) span residues 20–40, 44–64, 68–88, 89–109, and 125–145; these read VMVLVILCLIPGVFLQSYFFG, LIQISLACLAALASEAFILKI, PVLNTLKDASALLTAILLAIS, IPPLAPWWIVVIGTIFAIIFV, and MAGYVLLLISFPVQMTSWLPV. Thr-187 is modified (FMN phosphoryl threonine). Transmembrane regions (helical) follow at residues 215–235, 241–261, 267–287, 300–320, and 322–342; these read SWQQIYWINGAFLAGGLILLF, WHIPMSFLLGIGIFSFIAFAY, APPLFHLFSGATMLGAFFILS, ILYALLIAFIVVIIRNVGGYP, and AVAFAVLLGNMCVPLIDYYTQ.

The protein belongs to the NqrB/RnfD family. As to quaternary structure, the complex is composed of six subunits: RnfA, RnfB, RnfC, RnfD, RnfE and RnfG. FMN is required as a cofactor.

It is found in the cell inner membrane. Functionally, part of a membrane-bound complex that couples electron transfer with translocation of ions across the membrane. The sequence is that of Ion-translocating oxidoreductase complex subunit D from Psychromonas ingrahamii (strain DSM 17664 / CCUG 51855 / 37).